Reading from the N-terminus, the 503-residue chain is ATP synthase subunit alpha (503 aa).

170 to 177 (GDRQTGKT) is a binding site for ATP.

F-type ATPases have 2 components, CF(1) - the catalytic core - and CF(0) - the membrane proton channel. CF(1) has five subunits: alpha(3), beta(3), gamma(1), delta(1), epsilon(1). CF(0) has four main subunits: a(1), b(1), b'(1) and c(9-12).

Its subcellular location is the cellular thylakoid membrane. The enzyme catalyses ATP + H2O + 4 H(+)(in) = ADP + phosphate + 5 H(+)(out). Its activity is regulated as follows. Inhibited by dicyclohexylcarbodiimide. Produces ATP from ADP in the presence of a proton gradient across the membrane. The alpha chain is a regulatory subunit. In terms of biological role, the complex from the organism is particularly stable to disruption and remains functional after 6 hrs at 55 degrees Celsius. The sequence is that of ATP synthase subunit alpha from Thermosynechococcus vestitus (strain NIES-2133 / IAM M-273 / BP-1).